We begin with the raw amino-acid sequence, 194 residues long: Holliday junction branch migration complex subunit RuvA (194 aa).

The interval 1–64 (MIGRLRGVLT…DDSAALYGFL (64 aa)) is domain I. The tract at residues 65–140 (SESERRLFRH…RAADFNNGIS (76 aa)) is domain II. The interval 140-144 (STSGK) is flexible linker. The domain III stretch occupies residues 145–194 (LNLDTVSEAALALQQLGYKPAEAARMARDAGTESDDVASVIKKALQAALR).

It belongs to the RuvA family. In terms of assembly, homotetramer. Forms an RuvA(8)-RuvB(12)-Holliday junction (HJ) complex. HJ DNA is sandwiched between 2 RuvA tetramers; dsDNA enters through RuvA and exits via RuvB. An RuvB hexamer assembles on each DNA strand where it exits the tetramer. Each RuvB hexamer is contacted by two RuvA subunits (via domain III) on 2 adjacent RuvB subunits; this complex drives branch migration. In the full resolvosome a probable DNA-RuvA(4)-RuvB(12)-RuvC(2) complex forms which resolves the HJ.

It is found in the cytoplasm. The RuvA-RuvB-RuvC complex processes Holliday junction (HJ) DNA during genetic recombination and DNA repair, while the RuvA-RuvB complex plays an important role in the rescue of blocked DNA replication forks via replication fork reversal (RFR). RuvA specifically binds to HJ cruciform DNA, conferring on it an open structure. The RuvB hexamer acts as an ATP-dependent pump, pulling dsDNA into and through the RuvAB complex. HJ branch migration allows RuvC to scan DNA until it finds its consensus sequence, where it cleaves and resolves the cruciform DNA. The sequence is that of Holliday junction branch migration complex subunit RuvA from Xylella fastidiosa (strain 9a5c).